Consider the following 132-residue polypeptide: Small ribosomal subunit protein uS8c (132 aa).

The protein belongs to the universal ribosomal protein uS8 family. In terms of assembly, part of the 30S ribosomal subunit.

It is found in the plastid. The protein resides in the chloroplast. In terms of biological role, one of the primary rRNA binding proteins, it binds directly to 16S rRNA central domain where it helps coordinate assembly of the platform of the 30S subunit. The sequence is that of Small ribosomal subunit protein uS8c (rps8) from Angiopteris evecta (Mule's foot fern).